A 742-amino-acid chain; its full sequence is Two pore calcium channel protein 1 (742 aa).

The segment at 1-44 (MSEAQAPLITEEAAERGLASSGSRRLSDGGGGQGSRKYRRRSDA) is disordered. Topologically, residues 1-82 (MSEAQAPLIT…NDTRFGRAMS (82 aa)) are cytoplasmic. A helical transmembrane segment spans residues 83 to 103 (FYFVYLRLDWLWSLNIFALIL). Residues 104–140 (LNFLEKPLWCRKDALHACDQRDMYFLGQLPYFSKTES) are Extracellular-facing. The chain crosses the membrane as a helical span at residues 141–161 (LIYEGLTLVILVMEILCPLSY). Residues 162–176 (EGLNIFWRSTTNKLK) lie on the Cytoplasmic side of the membrane. Residues 177 to 197 (ILLLFILACDILVFAFSSQPF) form a helical membrane-spanning segment. The Extracellular segment spans residues 198–204 (RLAPYIR). A helical; Voltage-sensor transmembrane segment spans residues 205-226 (VVFLIMTIRELRMCAITLAGLI). The helical transmembrane segment at 227 to 247 (GTYLNVLALSLLFLLFASWLA) threads the bilayer. Residues 248–258 (YVTFEDTPQGK) lie on the Extracellular side of the membrane. The pore-forming intramembrane region spans 259-273 (TIFSSYGVTLYQMFV). Residues 274 to 296 (LFTTSNNPDVWVPAYKISRWYSL) lie on the Extracellular side of the membrane. The helical transmembrane segment at 297–317 (FFIVYVLLGVYFLTNLILAVI) threads the bilayer. Over 318 to 446 (YDSFKEQFAK…SFVRSRTFEY (129 aa)) the chain is Cytoplasmic. 2 EF-hand domains span residues 335-370 (IRKN…LNKY) and 376-411 (TSRE…IAIK). Residues 447 to 467 (IIVFVLLINLVAVIIETTLDI) form a helical membrane-spanning segment. Topologically, residues 468 to 480 (ENSSSQETWQEVE) are extracellular. An N-linked (GlcNAc...) asparagine glycan is attached at asparagine 469. Residues 481–501 (FFLGWIYVAEMALKIFSLGFG) traverse the membrane as a helical segment. Residues 502 to 510 (AYWMEGQNK) lie on the Cytoplasmic side of the membrane. A helical membrane pass occupies residues 511 to 531 (FDFVLTWTIFIGETLTFAFPS). Over 532 to 540 (KLPFLSNGE) the chain is Extracellular. A helical; Voltage-sensor membrane pass occupies residues 541–558 (WIRYLLLGRVLRLTRILL). At 559 to 582 (QVQRFRVFVATFFTLMSSLMPYLG) the chain is on the cytoplasmic side. Residues 583–603 (IVFCILCMYCSLGLQIFGGIV) traverse the membrane as a helical segment. Over 604–627 (YAGNPTLEETDLFSNDYLLFNFND) the chain is Extracellular. An intramembrane region (pore-forming) is located at residues 628 to 642 (YPSGMVTLFNLLVMG). Residues 643 to 663 (NWQVWMESYWQLTGSSWSLIY) lie on the Extracellular side of the membrane. The chain crosses the membrane as a helical span at residues 664 to 684 (FVSFYLISILLLLNLIVAFVL). Residues 685-742 (EAFFAEMELEKGEEVDIQSPTSGGIKKRRSMRVRSKGTMVDILLHHMLSNELDGSQNS) lie on the Cytoplasmic side of the membrane.

It belongs to the calcium channel alpha-1 subunit (TC 1.A.1.11) family. Two pore calcium channel subfamily. In terms of assembly, homodimer.

Its subcellular location is the membrane. With respect to regulation, inhibited by Al(3+). In terms of biological role, functions as a voltage-gated inward-rectifying Ca(2+) channel (VDCC) across the plasma membrane that mediates sucrose-induced Ca(2+) influx in autotrophically grown leaf cells. Acts as the major ROS-responsive Ca(2+) channel and is the possible target of Al-dependent inhibition. Plays a regulatory role in defense responses. The polypeptide is Two pore calcium channel protein 1 (TPC1) (Hordeum vulgare (Barley)).